The chain runs to 328 residues: COP9 signalosome complex subunit 6 (328 aa).

In terms of domain architecture, MPN spans 42–175 (VALHPLVILN…VSVFESVIDI (134 aa)).

It belongs to the peptidase M67A family. CSN6 subfamily. As to quaternary structure, component of the CSN complex, composed of COPS1/GPS1, COPS2, COPS3, COPS4, COPS5, COPS6, COPS7 (COPS7A or COPS7B), COPS8 and COPS9. In the complex, it probably interacts directly with COPS2, COPS4, COPS5, COPS7 (COPS7A or COPS7B) and COPS9. Interacts with the translation initiation factor EIF3S6. Interacts weakly with RBX1. Directly interacts with COP1 and 14-3-3 protein sigma/SFN. Interacts with ERCC6.

It localises to the cytoplasm. It is found in the nucleus. Functionally, component of the COP9 signalosome complex (CSN), a complex involved in various cellular and developmental processes. The CSN complex is an essential regulator of the ubiquitin (Ubl) conjugation pathway by mediating the deneddylation of the cullin subunits of SCF-type E3 ligase complexes, leading to decrease the Ubl ligase activity of SCF-type complexes such as SCF, CSA or DDB2. The complex is also involved in phosphorylation of p53/TP53, c-jun/JUN, IkappaBalpha/NFKBIA, ITPK1 and IRF8, possibly via its association with CK2 and PKD kinases. CSN-dependent phosphorylation of TP53 and JUN promotes and protects degradation by the Ubl system, respectively. Has some glucocorticoid receptor-responsive activity. Stabilizes COP1 through reducing COP1 auto-ubiquitination and decelerating COP1 turnover rate, hence regulates the ubiquitination of COP1 targets, including SFN. This chain is COP9 signalosome complex subunit 6 (COPS6), found in Pongo abelii (Sumatran orangutan).